We begin with the raw amino-acid sequence, 282 residues long: tRNA pseudouridine synthase A (282 aa).

Asp-53 functions as the Nucleophile in the catalytic mechanism. Position 119 (Tyr-119) interacts with substrate.

It belongs to the tRNA pseudouridine synthase TruA family. Homodimer.

The enzyme catalyses uridine(38/39/40) in tRNA = pseudouridine(38/39/40) in tRNA. Formation of pseudouridine at positions 38, 39 and 40 in the anticodon stem and loop of transfer RNAs. This is tRNA pseudouridine synthase A from Corynebacterium efficiens (strain DSM 44549 / YS-314 / AJ 12310 / JCM 11189 / NBRC 100395).